The following is a 368-amino-acid chain: Methionine import ATP-binding protein MetN (368 aa).

One can recognise an ABC transporter domain in the interval isoleucine 5–isoleucine 260. Glycine 41–serine 48 contributes to the ATP binding site.

Belongs to the ABC transporter superfamily. Methionine importer (TC 3.A.1.24) family. As to quaternary structure, the complex is composed of two ATP-binding proteins (MetN), two transmembrane proteins (MetI) and a solute-binding protein (MetQ).

It is found in the cell membrane. It carries out the reaction L-methionine(out) + ATP + H2O = L-methionine(in) + ADP + phosphate + H(+). The catalysed reaction is D-methionine(out) + ATP + H2O = D-methionine(in) + ADP + phosphate + H(+). Functionally, part of the ABC transporter complex MetNIQ involved in methionine import. Responsible for energy coupling to the transport system. This Lactococcus lactis subsp. cremoris (strain SK11) protein is Methionine import ATP-binding protein MetN.